Consider the following 493-residue polypeptide: Probable mannosyl-oligosaccharide alpha-1,2-mannosidase 1B (493 aa).

An N-terminal signal peptide occupies residues 1-18 (MHLPSLSVALALVSSSLA). 2 N-linked (GlcNAc...) asparagine glycosylation sites follow: Asn-87 and Asn-174. Cys-324 and Cys-353 are disulfide-bonded. Glu-367 functions as the Proton donor in the catalytic mechanism. The N-linked (GlcNAc...) asparagine glycan is linked to Asn-489.

Belongs to the glycosyl hydrolase 47 family. As to quaternary structure, monomer. Requires Ca(2+) as cofactor. The cofactor is Mg(2+).

The protein localises to the cytoplasmic vesicle lumen. It catalyses the reaction N(4)-(alpha-D-Man-(1-&gt;2)-alpha-D-Man-(1-&gt;2)-alpha-D-Man-(1-&gt;3)-[alpha-D-Man-(1-&gt;2)-alpha-D-Man-(1-&gt;3)-[alpha-D-Man-(1-&gt;2)-alpha-D-Man-(1-&gt;6)]-alpha-D-Man-(1-&gt;6)]-beta-D-Man-(1-&gt;4)-beta-D-GlcNAc-(1-&gt;4)-beta-D-GlcNAc)-L-asparaginyl-[protein] (N-glucan mannose isomer 9A1,2,3B1,2,3) + 4 H2O = N(4)-(alpha-D-Man-(1-&gt;3)-[alpha-D-Man-(1-&gt;3)-[alpha-D-Man-(1-&gt;6)]-alpha-D-Man-(1-&gt;6)]-beta-D-Man-(1-&gt;4)-beta-D-GlcNAc-(1-&gt;4)-beta-D-GlcNAc)-L-asparaginyl-[protein] (N-glucan mannose isomer 5A1,2) + 4 beta-D-mannose. The enzyme catalyses N(4)-(alpha-D-Man-(1-&gt;2)-alpha-D-Man-(1-&gt;2)-alpha-D-Man-(1-&gt;3)-[alpha-D-Man-(1-&gt;3)-[alpha-D-Man-(1-&gt;2)-alpha-D-Man-(1-&gt;6)]-alpha-D-Man-(1-&gt;6)]-beta-D-Man-(1-&gt;4)-beta-D-GlcNAc-(1-&gt;4)-beta-D-GlcNAc)-L-asparaginyl-[protein] (N-glucan mannose isomer 8A1,2,3B1,3) + 3 H2O = N(4)-(alpha-D-Man-(1-&gt;3)-[alpha-D-Man-(1-&gt;3)-[alpha-D-Man-(1-&gt;6)]-alpha-D-Man-(1-&gt;6)]-beta-D-Man-(1-&gt;4)-beta-D-GlcNAc-(1-&gt;4)-beta-D-GlcNAc)-L-asparaginyl-[protein] (N-glucan mannose isomer 5A1,2) + 3 beta-D-mannose. It participates in protein modification; protein glycosylation. Functionally, involved in the maturation of Asn-linked oligosaccharides. Progressively trims alpha-1,2-linked mannose residues from Man(9)GlcNAc(2) to produce Man(5)GlcNAc(2). The polypeptide is Probable mannosyl-oligosaccharide alpha-1,2-mannosidase 1B (mns1B) (Neosartorya fischeri (strain ATCC 1020 / DSM 3700 / CBS 544.65 / FGSC A1164 / JCM 1740 / NRRL 181 / WB 181) (Aspergillus fischerianus)).